Consider the following 1183-residue polypeptide: MGAVKSRTITSADVDADEQLQHPHSHAHHHSMRNGHQHNGSISSGTLQKQDLRYDIGCSSQYQHVRQPSLRSRSQQPMPTTDELDRRFAKVLASMDLPPDKAKLLRNYDDEKKWDMICDQEMVQAKDPPSHYLSKLRTYLDPKASRSHRLYLFYFLCQKRKMVGESTSTQVLRDLEISLRTNHIEWVKEFLDDTNQGLDALVDYLSFRLQMMRHEQRLQGVLCASEERLNLTNGGDGGEIVMGNSSSVSPGGGGGLLSHGNSTGHGLANGTLDSRQQHTMSYGFLRPTIADALDSPSLKRRSRHIAKLNMGAATDDIHVSIMCLRAIMNNKYGFNMVIQHREAINCIALSLIHKSLRTKALVLELLAAICLVKGGHEIILGSFDNFKDVCQEKRRFQTLMEYFMNFEAFNIDFMVACMQFMNIVVHSVEDMNYRVHLQYEFTALGLDKYLERIRLTESEELKVQISAYLDNVFDVAALMEDSETKTSALERVQELEDQLEREIDRNSEFLYKYAELESESLTLKTEREQLAMIRQKLEEELTVMQRMLQHNEQELKKRDTLLHTKNMELQTLSRSLPRSASSGDGSLANGGLMAGSTSGAASLTLPPPPPPMPASPTASSAAPPPPPPPAPPAPPPPPGFSPLGSPSGSLASTAPSPPHAPPMLSSFQPPPPPVAGFMPAPDGAMTIKRKVPTKYKLPTLNWIALKPNQVRGTIFNELDDEKIFKQIDFNEFEERFKIGIGGALRNGSNGTEVDGSLQSSKRFKRPDNVSLLEHTRLRNIAISRRKLGMPIDDVIAAIHSLDLKKLSLENVELLQKMVPTDAEVKSYKEYIIERKDQQLLTEEDKFMLQLSRVERISSKLAIMNYMGNFVDSVHLISPQVQSIAGASTSLKQSRKFKAVLEIVLAFGNYLNSNKRGPAYGFKLQSLDTLIDTKSTDKRSSLLHYIVATIRAKFPELLNFESELYGTDKAASVALENVVADVQELEKGMDLVRKEAELRVKGAQTHILRDFLNNSEDKLKKIKSDLRHAQEAFKECVEYFGDSSRNADAAAFFALIVRFTRAFKQHDQENEQRLRLEKAAALAASKKENDQVLMRNKVNQKKQQLPSNGALSLQEAVINELKSKAHSVREKKLLQQDEVYNGALEDILLGLKSEPYRRADAVRRSQRRRIDNNRLSRTLEEMDC.

Disordered regions lie at residues 1–44 and 63–82; these read MGAV…SISS and QHVR…PTTD. Basic residues predominate over residues 23-36; sequence PHSHAHHHSMRNGH. Residues 63-79 are compositionally biased toward polar residues; the sequence is QHVRQPSLRSRSQQPMP. The 484-residue stretch at 76–559 folds into the GBD/FH3 domain; that stretch reads QPMPTTDELD…HNEQELKKRD (484 aa). Phosphoserine is present on Ser-225. Positions 572 to 584 are enriched in polar residues; the sequence is LSRSLPRSASSGD. A disordered region spans residues 572 to 681; the sequence is LSRSLPRSAS…PPVAGFMPAP (110 aa). 2 stretches are compositionally biased toward pro residues: residues 605 to 614 and 622 to 640; these read LPPPPPPMPA and APPP…PPGF. The span at 641–654 shows a compositional bias: low complexity; sequence SPLGSPSGSLASTA. One can recognise an FH2 domain in the interval 687–1088; the sequence is IKRKVPTKYK…AALAASKKEN (402 aa). A DAD domain is found at 1136 to 1169; the sequence is DEVYNGALEDILLGLKSEPYRRADAVRRSQRRRI.

Belongs to the formin homology family. Self-associates. Interacts (via GBD/FH3 domain) with Cdc42; the interaction is stronger with the GTP bound form of Cdc42.

Its function is as follows. Together with Cdc42, involved in establishment of planar cell polarity in the developing compound eye by contributing to ommatidial rotation. Together with DAAM and Cdc42, has a role in neuronal development of mushroom bodies. This Drosophila melanogaster (Fruit fly) protein is Formin-like protein.